A 76-amino-acid chain; its full sequence is Sec-independent protein translocase protein TatA (76 aa).

The helical transmembrane segment at 1–21 (MGGLSIWHWLIVLLIVALVFG) threads the bilayer. The disordered stretch occupies residues 43 to 76 (MKEGEAPADAQQLPRSGSVDVNAKETTRSDSNKA). Positions 64–76 (NAKETTRSDSNKA) are enriched in basic and acidic residues.

Belongs to the TatA/E family. The Tat system comprises two distinct complexes: a TatABC complex, containing multiple copies of TatA, TatB and TatC subunits, and a separate TatA complex, containing only TatA subunits. Substrates initially bind to the TatABC complex, which probably triggers association of the separate TatA complex to form the active translocon.

The protein localises to the cell inner membrane. In terms of biological role, part of the twin-arginine translocation (Tat) system that transports large folded proteins containing a characteristic twin-arginine motif in their signal peptide across membranes. TatA could form the protein-conducting channel of the Tat system. The polypeptide is Sec-independent protein translocase protein TatA (Burkholderia lata (strain ATCC 17760 / DSM 23089 / LMG 22485 / NCIMB 9086 / R18194 / 383)).